We begin with the raw amino-acid sequence, 312 residues long: Olfactory receptor 14C36 (312 aa).

The Extracellular portion of the chain corresponds to 1 to 23 (MPNSTTVMEFLLMRFSDVWTLQI). A glycan (N-linked (GlcNAc...) asparagine) is linked at asparagine 3. Residues 24–44 (LHSASFFMLYLVTLMGNILIV) traverse the membrane as a helical segment. Over 45–52 (TVTTCDSS) the chain is Cytoplasmic. The helical transmembrane segment at 53–73 (LHMPMYFFLRNLSILDACYIS) threads the bilayer. The Extracellular segment spans residues 74–97 (VTVPTSCVNSLLDSTTISKAGCVA). Cysteine 95 and cysteine 187 form a disulfide bridge. Residues 98 to 118 (QVFLVVFFVYVELLFLTIMAH) traverse the membrane as a helical segment. Over 119–137 (DRYVAVCQPLHYPVIVNSR) the chain is Cytoplasmic. The chain crosses the membrane as a helical span at residues 138–158 (ICIQMTLASLLSGLVYAGMHT). Residues 159–194 (GSTFQLPFCRSNVIHQFFCDIPSLLKLSCSDTFSNE) are Extracellular-facing. Residues 195–215 (VMIVVSALGVGGGCFIFIIRS) traverse the membrane as a helical segment. Topologically, residues 216–235 (YIHIFSTVLGFPRGADRTKA) are cytoplasmic. Residues 236–256 (FSTCIPHILVVSVFLSSCSSV) traverse the membrane as a helical segment. Residues 257 to 269 (YLRPPAIPAATQD) lie on the Extracellular side of the membrane. The chain crosses the membrane as a helical span at residues 270 to 290 (LILSGFYSIMPPLFNPIIYSL). The Cytoplasmic portion of the chain corresponds to 291–312 (RNKQIKVAIKKIMKRIFYSENV).

It belongs to the G-protein coupled receptor 1 family.

It is found in the cell membrane. Odorant receptor. This is Olfactory receptor 14C36 (OR14C36) from Homo sapiens (Human).